We begin with the raw amino-acid sequence, 3021 residues long: Genome polyprotein (3021 aa).

At S2 the chain carries N-acetylserine; by host. The interval 2-23 (STLPKPQRKTKRNTIRRPQDVK) is interaction with STAT1. An interaction with EIF2AK2/PKR region spans residues 2–58 (STLPKPQRKTKRNTIRRPQDVKFPGGGVIYVGVYVLPRRGPRLGVRATRKTSERSQP). Residues 2 to 59 (STLPKPQRKTKRNTIRRPQDVKFPGGGVIYVGVYVLPRRGPRLGVRATRKTSERSQPR) are interaction with DDX3X. The tract at residues 2–75 (STLPKPQRKT…PKARRSEGRS (74 aa)) is disordered. Over 2 to 168 (STLPKPQRKT…EDGINFATGN (167 aa)) the chain is Cytoplasmic. 2 short sequence motifs (nuclear localization signal) span residues 5-13 (PKPQRKTKR) and 38-43 (PRRGPR). The span at 7–16 (PQRKTKRNTI) shows a compositional bias: basic residues. At S53 the chain carries Phosphoserine; by host. Short sequence motifs (nuclear localization signal) lie at residues 58–64 (PRGRRKP) and 66–71 (PKARRS). The segment covering 58–68 (PRGRRKPIPKA) has biased composition (basic residues). Phosphoserine; by host occurs at positions 99 and 116. The interval 112-152 (PRRRSRNLGKVIDTLTCGFADLMGYIPLVGAPLGGAARALA) is important for endoplasmic reticulum and mitochondrial localization. Positions 122 to 173 (VIDTLTCGFADLMGYIPLVGAPLGGAARALAHGVRALEDGINFATGNLPGCS) are interaction with APOA2. The important for lipid droplets localization stretch occupies residues 164 to 167 (FATG). Residues 169 to 189 (LPGCSFSIFLLALFSCLIHPA) traverse the membrane as a helical segment. The propeptide at 178 to 191 (LLALFSCLIHPAAS) is ER anchor for the core protein, removed in mature form by host signal peptidase. The Lumenal portion of the chain corresponds to 190-358 (ASLEWRNTSG…AGAHWGIIAG (169 aa)). N-linked (GlcNAc...) asparagine; by host glycosylation is found at N196, N209, and N234. The important for fusion stretch occupies residues 265 to 296 (LVGAGTMCSALYVGDMCGPVFLVGQAFTFRPR). N-linked (GlcNAc...) asparagine; by host glycosylation is present at N305. The chain crosses the membrane as a helical span at residues 359 to 379 (LAYYSMQGNWAKVAIIMVMFS). Topologically, residues 380–731 (GVDASTHVTA…WEFVILIFLL (352 aa)) are lumenal. The segment at 385 to 412 (THVTAGQAARNAYGITSLFSVGAKQNLQ) is HVR1. Residues N417, N423, and N430 are each glycosylated (N-linked (GlcNAc...) (high mannose) asparagine; by host). Cystine bridges form between C429–C553, C452–C459, C487–C495, and C504–C509. The N-linked (GlcNAc...) asparagine; by host glycan is linked to N448. Residues 475–479 (ANITG) are HVR2. The N-linked (GlcNAc...) asparagine; by host glycan is linked to N476. Residues 481–494 (SDDKPYCWHYAPRP) are CD81-binding 1. N-linked (GlcNAc...) asparagine; by host glycosylation occurs at N533. The tract at residues 545-552 (PPSGRWFG) is CD81-binding 2. An N-linked (GlcNAc...) asparagine; by host glycan is attached at N557. Intrachain disulfides connect C565–C570, C587–C591, C603–C626, and C613–C650. Residues N629 and N651 are each glycosylated (N-linked (GlcNAc...) (high mannose) asparagine; by host). C658 and C683 are oxidised to a cystine. The segment at 666–677 (SEQHPLLHSTTE) is PKR/eIF2-alpha phosphorylation homology domain (PePHD). The helical transmembrane segment at 732 to 752 (LADARVCVALWLILTISQAEA) threads the bilayer. At 753–763 (ALENLVTLNAV) the chain is on the lumenal side. A helical membrane pass occupies residues 764 to 784 (AAAGTHGIGWYLVAFCAAWYV). Residues 785 to 787 (RGK) are Cytoplasmic-facing. Residues 788–809 (LVPLVTYSLTGLWSLALLVLLL) traverse the membrane as a helical segment. At 810-819 (PQRAYAWSGE) the chain is on the lumenal side. The chain crosses the membrane as a helical span at residues 820 to 840 (DSATLGAGILVLFGFFTLSPW). Over 841–844 (YKHW) the chain is Cytoplasmic. A helical transmembrane segment spans residues 845-864 (IARLIWWNQYTICRCESALH). At 865-887 (VWVPPLLARGGRDGVILLTSLLY) the chain is on the lumenal side. Residues 888–908 (PSLIFDITKLLIAALGPLYLI) traverse the membrane as a helical segment. In terms of domain architecture, Peptidase C18 spans 905–1032 (LYLIQATITA…DYREMGWRLL (128 aa)). At 909 to 1663 (QATITATPYF…CMSADLEVTT (755 aa)) the chain is on the cytoplasmic side. Residues 910–1212 (ATITATPYFV…PVETLSTQAR (303 aa)) are protease NS2-3. A lipid anchor (S-palmitoyl cysteine; by host) is attached at C928. Residues 935–955 (MGGKYFQMIILSLADGSNTYL) are interaction with host SCPS1. Active-site for protease NS2 activity; shared with dimeric partner residues include H958, E978, and C999. Residues 1033 to 1214 (APITAYAQQT…ETLSTQARSP (182 aa)) form the Peptidase S29 domain. Residues H1089 and D1113 each act as charge relay system; for serine protease NS3 activity in the active site. Zn(2+) contacts are provided by C1129 and C1131. S1171 acts as the Charge relay system; for serine protease NS3 activity in catalysis. Positions 1177 and 1181 each coordinate Zn(2+). The 153-residue stretch at 1223–1375 (PAVPQSYQVG…SNIEEVALGS (153 aa)) folds into the Helicase ATP-binding domain. 1236–1243 (APTGSGKS) lines the ATP pocket. S1243 is a binding site for Mg(2+). Positions 1322–1325 (DDCH) match the DECH box motif. Positions 1382 to 1544 (YGKAIPIACI…DLQPAETTVR (163 aa)) constitute a Helicase C-terminal domain. Positions 1492–1504 (QRRGRTGRGRLGT) are RNA-binding. Residues 1664–1684 (STWVLLGGVLAAVAAYCLSVG) traverse the membrane as a helical segment. Residues 1685–1696 (CVVIVGHIELGG) form an NS3-binding region. Over 1685–1811 (CVVIVGHIEL…SVTSPLTTNQ (127 aa)) the chain is Cytoplasmic. Residues 1812 to 1830 (TMFFNILGGWVATHLAGPQ) form a helical membrane-spanning segment. Over 1831-1834 (ASSA) the chain is Lumenal. The chain crosses the membrane as a helical span at residues 1835–1855 (FVVSGLAGAAIGGIGLGRVLL). Residue D1856 is a topological domain, cytoplasmic. The helical transmembrane segment at 1857–1877 (ILAGYGAGVSGALVAFKIMGG) threads the bilayer. The Lumenal segment spans residues 1878–1887 (EPPTTEDMVN). The helical transmembrane segment at 1888–1908 (LLPAILSPGALVVGVICAAIL) threads the bilayer. Over 1909–1978 (RRHVGPGEGP…WINEDYPSPC (70 aa)) the chain is Cytoplasmic. C1978 is lipidated: S-palmitoyl cysteine; by host. Residues 1979–2008 (SGDWLRIIWDWVCSVVSDFKTWLSAKIMPA) lie within the membrane without spanning it. Residues 2009–3000 (LPGLPFISCQ…YHSVSRARTR (992 aa)) are Cytoplasmic-facing. Zn(2+) contacts are provided by C2017, C2035, C2037, and C2058. Residues 2126 to 2214 (EFFTEVDGVR…ASSSASQLSA (89 aa)) form an FKBP8-binding region. Residues 2126–2338 (EFFTEVDGVR…PVPPPRRKRT (213 aa)) form a transcriptional activation region. Positions 2141-2145 (PPCRP) are interaction with non-structural protein 4A. A disordered region spans residues 2193–2215 (ARRLARGSPPSEASSSASQLSAP). The segment at 2195–2448 (RLARGSPPSE…ALITPCSAEE (254 aa)) is interaction with host SKP2. A phosphoserine; by host mark is found at S2200, S2203, S2207, S2210, S2213, and S2216. The segment covering 2200-2215 (SPPSEASSSASQLSAP) has biased composition (low complexity). The interval 2216–2255 (SLKATCQTHRPHPDAELVDANLLWRQEMGSNITRVESETK) is ISDR. The tract at residues 2216-2281 (SLKATCQTHR…AELSAAAECF (66 aa)) is interaction with EIF2AK2/PKR. The segment at 2255-2312 (KVVILDSFEPLRAETDDAELSAAAECFKKPPKYPPALPIWARPDYNPPLLDRWKSPDY) is NS4B-binding. The interval 2305–2383 (DRWKSPDYVP…DTQSSTASKV (79 aa)) is V3. Disordered regions lie at residues 2318–2338 (HGCALPPKGAPPVPPPRRKRT) and 2356–2419 (KSFP…WSTV). The SH3-binding motif lies at 2328-2331 (PPVP). Positions 2333–2341 (PRRKRTIQL) match the Nuclear localization signal motif. K2356 participates in a covalent cross-link: Glycyl lysine isopeptide (Lys-Gly) (interchain with G-Cter in ubiquitin). Low complexity predominate over residues 2359–2381 (PSSKPQEENSSSSGVDTQSSTAS). Residues S2459 and S2472 each carry the phosphoserine; by host modification. One can recognise a RdRp catalytic domain in the interval 2644–2762 (PLGFSYDTRC…VAESDGVDED (119 aa)). Mg(2+)-binding residues include D2650, D2748, and D2749. The chain crosses the membrane as a helical span at residues 3001 to 3021 (YLLLCLLLLTVGVGIFLLPAR).

Belongs to the hepacivirus polyprotein family. As to quaternary structure, homooligomer. Interacts with E1 (via C-terminus). Interacts with the non-structural protein 5A. Interacts (via N-terminus) with host STAT1 (via SH2 domain); this interaction results in decreased STAT1 phosphorylation and ubiquitin-mediated proteasome-dependent STAT1 degradation, leading to decreased IFN-stimulated gene transcription. Interacts with host STAT3; this interaction constitutively activates STAT3. Interacts with host LTBR receptor. Interacts with host TNFRSF1A receptor and possibly induces apoptosis. Interacts with host HNRPK. Interacts with host YWHAE. Interacts with host UBE3A/E6AP. Interacts with host DDX3X. Interacts with host APOA2. Interacts with host RXRA protein. Interacts with host SP110 isoform 3/Sp110b; this interaction sequesters the transcriptional corepressor SP110 away from the nucleus. Interacts with host CREB3 nuclear transcription protein; this interaction triggers cell transformation. Interacts with host ACY3. Interacts with host C1QR1. Interacts with host RBM24; this interaction, which enhances the interaction of the mature core protein with 5'-UTR, may inhibit viral translation and favor replication. Interacts with host EIF2AK2/PKR; this interaction induces the autophosphorylation of EIF2AK2. Part of the viral assembly initiation complex composed of NS2, E1, E2, NS3, NS4A, NS5A and the mature core protein. Forms a heterodimer with envelope glycoprotein E2. Interacts with mature core protein. Interacts with protease NS2. The heterodimer E1/E2 interacts with host CLDN1; this interaction plays a role in viral entry into host cell. Interacts with host SPSB2 (via C-terminus). Part of the viral assembly initiation complex composed of NS2, E1, E2, NS3, NS4A, NS5A and the mature core protein. Interacts with host NEURL3; this interaction prevents E1 binding to glycoprotein E2. In terms of assembly, forms a heterodimer with envelope glycoprotein E1. Interacts with host CD81 and SCARB1 receptors; these interactions play a role in viral entry into host cell. Interacts with host EIF2AK2/PKR; this interaction inhibits EIF2AK2 and probably allows the virus to evade the innate immune response. Interacts with host CD209/DC-SIGN and CLEC4M/DC-SIGNR. Interact with host SPCS1; this interaction is essential for viral particle assembly. Interacts with protease NS2. The heterodimer E1/E2 interacts with host CLDN1; this interaction plays a role in viral entry into host cell. Part of the viral assembly initiation complex composed of NS2, E1, E2, NS3, NS4A, NS5A and the mature core protein. Interacts with host SLC3A2/4F2hc; the interaction may facilitate viral entry into host cell. Interacts with human PLSCR1. As to quaternary structure, homohexamer. Homoheptamer. Interacts with protease NS2. Homodimer. Interacts with host SPCS1; this interaction is essential for viral particle assembly. Interacts with envelope glycoprotein E1. Interacts with envelope glycoprotein E2. Interacts with viroporin p7. Interacts with serine protease/helicase NS3. Part of the replication complex composed of NS2, NS3, NS4A, NS4B, NS5A and the RNA-directed RNA polymerase embedded in an ER-derived membranous web. Part of the viral assembly initiation complex composed of NS2, E1, E2, NS3, NS4A, NS5A and the mature core protein. In terms of assembly, interacts with protease NS2. Interacts with non-structural protein 4A; this interaction stabilizes the folding of NS3 serine protease. NS3-NS4A interaction is essential for NS3 activation and allows membrane anchorage of the latter. NS3/NS4A complex also prevents phosphorylation of host IRF3, thus preventing the establishment of dsRNA induced antiviral state. Interacts with host MAVS; this interaction leads to the cleavage and inhibition of host MAVS. Interacts with host TICAM1; this interaction leads to the cleavage and inhibition of host TICAM1. Interacts with host TANK-binding kinase/TBK1; this interaction results in the inhibition of the association between TBK1 and IRF3, which leads to the inhibition of IRF3 activation. Interacts with host RBM24. Part of the replication complex composed of NS2, NS3, NS4A, NS4B, NS5A and the RNA-directed RNA polymerase embedded in an ER-derived membranous web. Part of the viral assembly initiation complex composed of NS2, E1, E2, NS3, NS4A, NS5A and the mature core protein. As to quaternary structure, interacts with NS3 serine protease; this interaction stabilizes the folding of NS3 serine protease. NS3-NS4A interaction is essential for NS3 activation and allows membrane anchorage of the latter. Interacts with non-structural protein 5A (via N-terminus). Part of the replication complex composed of NS2, NS3, NS4A, NS4B, NS5A and the RNA-directed RNA polymerase embedded in an ER-derived membranous web. Part of the viral assembly initiation complex composed of NS2, E1, E2, NS3, NS4A, NS5A and the mature core protein. Homomultimer. Interacts with non-structural protein NS5A. Interacts with host PLA2G4C; this interaction likely initiates the recruitment of replication complexes to lipid droplets. Interacts with host STING; this interaction disrupts the interaction between STING and TBK1 thereby suppressing the interferon signaling. Part of the replication complex composed of NS2, NS3, NS4A, NS4B, NS5A and the RNA-directed RNA polymerase embedded in an ER-derived membranous web. In terms of assembly, monomer. Homodimer; dimerization is required for RNA-binding. Interacts with the mature core protein. Interacts (via N-terminus) with non-structural protein 4A. Interacts with non-structural protein 4B. Interacts (via region D2) with RNA-directed RNA polymerase. Part of the viral assembly initiation complex composed of NS2, E1, E2, NS3, NS4A, NS5A and the mature core protein. Part of the replication complex composed of NS2, NS3, NS4A, NS4B, NS5A and the RNA-directed RNA polymerase embedded in an ER-derived membranous web. Interacts with host GRB2. Interacts with host BIN1. Interacts with host PIK3R1. Interacts with host SRCAP. Interacts with host FKBP8. Interacts (via C-terminus) with host VAPB (via MSP domain). Interacts with host EIF2AK2/PKR; this interaction leads to disruption of EIF2AK2 dimerization by NS5A and probably allows the virus to evade the innate immune response. Interacts (via N-terminus) with host PACSIN2 (via N-terminus); this interaction attenuates protein kinase C alpha-mediated phosphorylation of PACSIN2 by disrupting the interaction between PACSIN2 and PRKCA. Interacts (via N-terminus) with host SRC kinase (via SH2 domain). Interacts with most Src-family kinases. Interacts with host IFI27 and SKP2; promotes the ubiquitin-mediated proteasomal degradation of NS5A. Interacts with host GPS2. Interacts with host TNFRSF21; this interaction allows the modulation by the virus of JNK, p38 MAPK, STAT3, and Akt signaling pathways in a DR6-dependent manner. Interacts (via N-terminus) with host CIDEB (via N-terminus); this interaction seems to regulate the association of HCV particles with APOE. Interacts with host CHKA/Choline Kinase-alpha; CHKA bridges host PI4KA and NS5A and potentiates NS5A-stimulated PI4KA activity, which then facilitates the targeting of the ternary complex to the ER for viral replication. Interacts with host SPSB2 (via C-terminus); this interaction targets NS5A for ubiquitination and degradation. Interacts with host RAB18; this interaction may promote the association of NS5A and other replicase components with lipid droplets. Interacts (via region D2) with host PPIA/CYPA; the interaction stimulates RNA-binding ability of NS5A and is dependent on the peptidyl-prolyl cis-trans isomerase activity of PPIA/CYPA. Interacts with host TRIM14; this interaction induces the degradation of NS5A. As to quaternary structure, homooligomer. Interacts with non-structural protein 5A. Interacts with host VAPB. Interacts with host PRK2/PKN2. Interacts with host HNRNPA1 and SEPT6; these interactions facilitate viral replication. Part of the replication complex composed of NS2, NS3, NS4A, NS4B, NS5A and the RNA-directed RNA polymerase. It depends on Zn(2+) as a cofactor. Requires Mg(2+) as cofactor. Specific enzymatic cleavages in vivo yield mature proteins. The structural proteins, core, E1, E2 and p7 are produced by proteolytic processing by host signal peptidases. The core protein precursor is synthesized as a 23 kDa, which is retained in the ER membrane through the hydrophobic signal peptide. Cleavage by the signal peptidase releases the 21 kDa mature core protein. The cleavage of the core protein precursor occurs between aminoacids 176 and 188 but the exact cleavage site is not known. Some degraded forms of the core protein appear as well during the course of infection. The other proteins (p7, NS2, NS3, NS4A, NS4B, NS5A and NS5B) are cleaved by the viral proteases. Autoprocessing between NS2 and NS3 is mediated by the NS2 cysteine protease catalytic domain and regulated by the NS3 N-terminal domain. In terms of processing, phosphorylated by host PKC and PKA. Post-translationally, ubiquitinated; mediated by UBE3A and leading to core protein subsequent proteasomal degradation. Highly N-glycosylated. In terms of processing, palmitoylation is required for NS2/3 autoprocessing and E2 recruitment to membranes. Post-translationally, palmitoylated. This modification may play a role in its polymerization or in protein-protein interactions. Phosphorylated on serines in a basal form termed p56. p58 is a hyperphosphorylated form of p56. p56 and p58 coexist in the cell in roughly equivalent amounts. Hyperphosphorylation is dependent on the presence of NS4A. Host CSNK1A1/CKI-alpha or RPS6KB1 kinases may be responsible for NS5A phosphorylation. In terms of processing, tyrosine phosphorylation is essential for the interaction with host SRC. Post-translationally, ubiquitinated. Ubiquitination, most probably at Lys-2356, mediated by host IFI27 and SKP2 leads to proteasomal degradation, restricting viral infection. Ubiquitination by host TRIM22 leads to interruption of viral replication. The N-terminus is phosphorylated by host PRK2/PKN2.

The protein localises to the host endoplasmic reticulum membrane. Its subcellular location is the host mitochondrion membrane. It localises to the virion. It is found in the host cytoplasm. The protein resides in the host nucleus. The protein localises to the host lipid droplet. Its subcellular location is the virion membrane. It localises to the host mitochondrion. It is found in the host cell membrane. The protein resides in the host perinuclear region. The enzyme catalyses Hydrolysis of four peptide bonds in the viral precursor polyprotein, commonly with Asp or Glu in the P6 position, Cys or Thr in P1 and Ser or Ala in P1'.. The catalysed reaction is a ribonucleoside 5'-triphosphate + H2O = a ribonucleoside 5'-diphosphate + phosphate + H(+). It catalyses the reaction ATP + H2O = ADP + phosphate + H(+). It carries out the reaction RNA(n) + a ribonucleoside 5'-triphosphate = RNA(n+1) + diphosphate. Its activity is regulated as follows. Inhibited by the antiviral drug hexamethylene amiloride. Inhibition by amantadine appears to be genotype-dependent. Also inhibited by long-alkyl-chain iminosugar derivatives. With respect to regulation, activity is up-regulated by PRK2/PKN2-mediated phosphorylation. Its function is as follows. Packages viral RNA to form a viral nucleocapsid, and promotes virion budding. Participates in the viral particle production as a result of its interaction with the non-structural protein 5A. Binds RNA and may function as a RNA chaperone to induce the RNA structural rearrangements taking place during virus replication. Modulates viral translation initiation by interacting with viral IRES and 40S ribosomal subunit. Affects various cell signaling pathways, host immunity and lipid metabolism. Prevents the establishment of cellular antiviral state by blocking the interferon-alpha/beta (IFN-alpha/beta) and IFN-gamma signaling pathways and by blocking the formation of phosphorylated STAT1 and promoting ubiquitin-mediated proteasome-dependent degradation of STAT1. Activates STAT3 leading to cellular transformation. Regulates the activity of cellular genes, including c-myc and c-fos. May repress the promoter of p53, and sequester CREB3 and SP110 isoform 3/Sp110b in the cytoplasm. Represses cell cycle negative regulating factor CDKN1A, thereby interrupting an important check point of normal cell cycle regulation. Targets transcription factors involved in the regulation of inflammatory responses and in the immune response: suppresses TNF-induced NF-kappa-B activation, and activates AP-1. Binds to dendritic cells (DCs) via C1QR1, resulting in down-regulation of T-lymphocytes proliferation. Alters lipid metabolism by interacting with hepatocellular proteins involved in lipid accumulation and storage. Induces up-regulation of FAS promoter activity, and thereby contributes to the increased triglyceride accumulation in hepatocytes (steatosis). Forms a heterodimer with envelope glycoprotein E2, which mediates virus attachment to the host cell, virion internalization through clathrin-dependent endocytosis and fusion with host membrane. Fusion with the host cell is most likely mediated by both E1 and E2, through conformational rearrangements of the heterodimer required for fusion rather than a classical class II fusion mechanism. E1/E2 heterodimer binds host apolipoproteins such as APOB and ApoE thereby forming a lipo-viro-particle (LVP). APOE associated to the LVP allows the initial virus attachment to cell surface receptors such as the heparan sulfate proteoglycans (HSPGs), syndecan-1 (SDC1), syndecan-1 (SDC2), the low-density lipoprotein receptor (LDLR) and scavenger receptor class B type I (SCARB1). The cholesterol transfer activity of SCARB1 allows E2 exposure and binding of E2 to SCARB1 and the tetraspanin CD81. E1/E2 heterodimer binding on CD81 activates the epithelial growth factor receptor (EGFR) signaling pathway. Diffusion of the complex E1-E2-EGFR-SCARB1-CD81 to the cell lateral membrane allows further interaction with Claudin 1 (CLDN1) and occludin (OCLN) to finally trigger HCV entry. Functionally, forms a heterodimer with envelope glycoprotein E1, which mediates virus attachment to the host cell, virion internalization through clathrin-dependent endocytosis and fusion with host membrane. Fusion with the host cell is most likely mediated by both E1 and E2, through conformational rearrangements of the heterodimer required for fusion rather than a classical class II fusion mechanism. The interaction between envelope glycoprotein E2 and host apolipoprotein E/APOE allows the proper assembly, maturation and infectivity of the viral particles. This interaction is probably promoted via the up-regulation of cellular autophagy by the virus. E1/E2 heterodimer binds host apolipoproteins such as APOB and APOE thereby forming a lipo-viro-particle (LVP). APOE associated to the LVP allows the initial virus attachment to cell surface receptors such as the heparan sulfate proteoglycans (HSPGs), syndecan-1 (SDC1), syndecan-1 (SDC2), the low-density lipoprotein receptor (LDLR) and scavenger receptor class B type I (SCARB1). The cholesterol transfer activity of SCARB1 allows E2 exposure and binding of E2 to SCARB1 and the tetraspanin CD81. E1/E2 heterodimer binding on CD81 activates the epithelial growth factor receptor (EGFR) signaling pathway. Diffusion of the complex E1-E2-EGFR-SCARB1-CD81 to the cell lateral membrane allows further interaction with Claudin 1 (CLDN1) and occludin (OCLN) to finally trigger HCV entry. Inhibits host EIF2AK2/PKR activation, preventing the establishment of an antiviral state. Viral ligand for CD209/DC-SIGN and CLEC4M/DC-SIGNR, which are respectively found on dendritic cells (DCs), and on liver sinusoidal endothelial cells and macrophage-like cells of lymph node sinuses. These interactions allow the capture of circulating HCV particles by these cells and subsequent facilitated transmission to permissive cells such as hepatocytes and lymphocyte subpopulations. The interaction between E2 and host amino acid transporter complex formed by SLC3A2 and SLC7A5/LAT1 may facilitate viral entry into host cell. In terms of biological role, ion channel protein that acts as a viroporin and plays an essential role in the assembly, envelopment and secretion of viral particles. Regulates the host cell secretory pathway, which induces the intracellular retention of viral glycoproteins and favors assembly of viral particles. Creates a pore in acidic organelles and releases Ca(2+) and H(+) in the cytoplasm of infected cells, leading to a productive viral infection. High levels of cytoplasmic Ca(2+) may trigger membrane trafficking and transport of viral ER-associated proteins to viroplasms, sites of viral genome replication. This ionic imbalance induces the assembly of the inflammasome complex, which triggers the maturation of pro-IL-1beta into IL-1beta through the action of caspase-1. Targets also host mitochondria and induces mitochondrial depolarization. In addition of its role as a viroporin, acts as a lipid raft adhesion factor. Its function is as follows. Cysteine protease required for the proteolytic auto-cleavage between the non-structural proteins NS2 and NS3. The N-terminus of NS3 is required for the function of NS2 protease (active region NS2-3). Promotes the initiation of viral particle assembly by mediating the interaction between structural and non-structural proteins. Displays three enzymatic activities: serine protease with a chymotrypsin-like fold, NTPase and RNA helicase. NS3 serine protease, in association with NS4A, is responsible for the cleavages of NS3-NS4A, NS4A-NS4B, NS4B-NS5A and NS5A-NS5B. The NS3/NS4A complex prevents phosphorylation of host IRF3, thus preventing the establishment of dsRNA induced antiviral state. The NS3/NS4A complex induces host amino acid transporter component SLC3A2, thus contributing to HCV propagation. NS3 RNA helicase binds to RNA and unwinds both dsDNA and dsRNA in the 3' to 5' direction, and likely resolves RNA complicated stable secondary structures in the template strand. Binds a single ATP and catalyzes the unzipping of a single base pair of dsRNA. Inhibits host antiviral proteins TBK1 and IRF3 thereby preventing the establishment of an antiviral state. Cleaves host MAVS/CARDIF thereby preventing the establishment of an antiviral state. Cleaves host TICAM1/TRIF, thereby disrupting TLR3 signaling and preventing the establishment of an antiviral state. Functionally, peptide cofactor which forms a non-covalent complex with the N-terminal of NS3 serine protease. The NS3/NS4A complex prevents phosphorylation of host IRF3, thus preventing the establishment of dsRNA induced antiviral state. The NS3/NS4A complex induces host amino acid transporter component SLC3A2, thus contributing to HCV propagation. In terms of biological role, induces a specific membrane alteration that serves as a scaffold for the virus replication complex. This membrane alteration gives rise to the so-called ER-derived membranous web that contains the replication complex. NS4B self-interaction contributes to its function in membranous web formation. Promotes host TRIF protein degradation in a CASP8-dependent manner thereby inhibiting host TLR3-mediated interferon signaling. Disrupts the interaction between STING and TBK1 contributing to the inhibition of interferon signaling. Its function is as follows. Phosphorylated protein that is indispensable for viral replication and assembly. Both hypo- and hyperphosphorylated states are required for the viral life cycle. The hyperphosphorylated form of NS5A is an inhibitor of viral replication. Involved in RNA-binding and especially in binding to the viral genome. Zinc is essential for RNA-binding. Participates in the viral particle production as a result of its interaction with the mature viral core protein. Its interaction with host VAPB may target the viral replication complex to vesicles. Down-regulates viral IRES translation initiation. Mediates interferon resistance, presumably by interacting with and inhibiting host EIF2AK2/PKR. Prevents BIN1-induced apoptosis. Acts as a transcriptional activator of some host genes important for viral replication when localized in the nucleus. Via the interaction with host PACSIN2, modulates lipid droplet formation in order to promote virion assembly. Modulates TNFRSF21/DR6 signaling pathway for viral propagation. RNA-dependent RNA polymerase that performs primer-template recognition and RNA synthesis during viral replication. Initiates RNA transcription/replication at a flavin adenine dinucleotide (FAD), resulting in a 5'- FAD cap on viral RNAs. In this way, recognition of viral 5' RNA by host pattern recognition receptors can be bypassed, thereby evading activation of antiviral pathways. In Homo sapiens (Human), this protein is Genome polyprotein.